A 347-amino-acid chain; its full sequence is Heat-inducible transcription repressor HrcA (347 aa).

It belongs to the HrcA family.

Its function is as follows. Negative regulator of class I heat shock genes (grpE-dnaK-dnaJ and groELS operons). Prevents heat-shock induction of these operons. This chain is Heat-inducible transcription repressor HrcA, found in Lactiplantibacillus plantarum (strain ATCC BAA-793 / NCIMB 8826 / WCFS1) (Lactobacillus plantarum).